The primary structure comprises 151 residues: UPF0756 membrane protein HSM_1471 (151 aa).

A run of 4 helical transmembrane segments spans residues 1–21, 52–72, 81–101, and 123–143; these read MSLQFNSIALLLVSLILLGVL, YGVNIGIIVLTIGVLSPIVSG, ALIHWKMFLAMAVGVLVAWFG, and ILGVAFLGGVPVGPLIAAGIL.

It belongs to the UPF0756 family.

Its subcellular location is the cell membrane. This Histophilus somni (strain 2336) (Haemophilus somnus) protein is UPF0756 membrane protein HSM_1471.